Consider the following 364-residue polypeptide: tRNA 2-selenouridine synthase (364 aa).

Residues 14-137 (LIADTPIIDV…LRQTAIQATI (124 aa)) enclose the Rhodanese domain. C97 serves as the catalytic S-selanylcysteine intermediate.

The protein belongs to the SelU family. As to quaternary structure, monomer.

The enzyme catalyses 5-methylaminomethyl-2-thiouridine(34) in tRNA + selenophosphate + (2E)-geranyl diphosphate + H2O + H(+) = 5-methylaminomethyl-2-selenouridine(34) in tRNA + (2E)-thiogeraniol + phosphate + diphosphate. It carries out the reaction 5-methylaminomethyl-2-thiouridine(34) in tRNA + (2E)-geranyl diphosphate = 5-methylaminomethyl-S-(2E)-geranyl-thiouridine(34) in tRNA + diphosphate. It catalyses the reaction 5-methylaminomethyl-S-(2E)-geranyl-thiouridine(34) in tRNA + selenophosphate + H(+) = 5-methylaminomethyl-2-(Se-phospho)selenouridine(34) in tRNA + (2E)-thiogeraniol. The catalysed reaction is 5-methylaminomethyl-2-(Se-phospho)selenouridine(34) in tRNA + H2O = 5-methylaminomethyl-2-selenouridine(34) in tRNA + phosphate. Its function is as follows. Involved in the post-transcriptional modification of the uridine at the wobble position (U34) of tRNA(Lys), tRNA(Glu) and tRNA(Gln). Catalyzes the conversion of 2-thiouridine (S2U-RNA) to 2-selenouridine (Se2U-RNA). Acts in a two-step process involving geranylation of 2-thiouridine (S2U) to S-geranyl-2-thiouridine (geS2U) and subsequent selenation of the latter derivative to 2-selenouridine (Se2U) in the tRNA chain. This chain is tRNA 2-selenouridine synthase, found in Escherichia coli (strain K12 / MC4100 / BW2952).